The primary structure comprises 293 residues: MRDLKGIFSALLVSFNEDGTINEKGLRQIIRHNIDKMKVDGLYVGGSTGENFMLSTEEKKEIFRIAKDEAKDQIALIAQVGSVNLKEAVELGKYATELGYDCLSAVTPFYYKFSFPEIKHYYDTIIAETGNNMIVYSIPFLTGVNMGIEQFGELYKNPKVLGVKFTAGDFYLLERLKKAYPNHLIWAGFDEMMLPAASLGVDGAIGSTFNVNGVRARQIFELTKAGKLAEALEIQHVTNDLIEGILANGLYLTIKELLKLEGVDAGYCREPMTSKATEEQLAKAKDLKAKFLS.

The aceneuramate site is built by Ser-47 and Thr-48. Tyr-136 serves as the catalytic Proton donor. Lys-164 functions as the Schiff-base intermediate with substrate in the catalytic mechanism. Positions 166, 188, 190, 191, and 207 each coordinate aceneuramate.

This sequence belongs to the DapA family. NanA subfamily. In terms of assembly, homotetramer.

The protein resides in the cytoplasm. The enzyme catalyses aceneuramate = aldehydo-N-acetyl-D-mannosamine + pyruvate. It functions in the pathway amino-sugar metabolism; N-acetylneuraminate degradation; D-fructose 6-phosphate from N-acetylneuraminate: step 1/5. Its function is as follows. Catalyzes the reversible aldol cleavage of N-acetylneuraminic acid (sialic acid; Neu5Ac) to form pyruvate and N-acetylmannosamine (ManNAc) via a Schiff base intermediate. In Haemophilus influenzae (strain ATCC 51907 / DSM 11121 / KW20 / Rd), this protein is N-acetylneuraminate lyase.